The chain runs to 764 residues: 5-methyltetrahydropteroyltriglutamate--homocysteine methyltransferase (764 aa).

5-methyltetrahydropteroyltri-L-glutamate contacts are provided by residues 16–19 (RELK) and lysine 121. L-homocysteine is bound by residues 440–442 (IGS) and glutamate 493. L-methionine is bound by residues 440–442 (IGS) and glutamate 493. 5-methyltetrahydropteroyltri-L-glutamate is bound by residues 524-525 (RC) and tryptophan 570. Aspartate 608 lines the L-homocysteine pocket. Position 608 (aspartate 608) interacts with L-methionine. A 5-methyltetrahydropteroyltri-L-glutamate-binding site is contributed by glutamate 614. Zn(2+) is bound by residues histidine 650, cysteine 652, and glutamate 674. Histidine 703 acts as the Proton donor in catalysis. Cysteine 735 contacts Zn(2+).

It belongs to the vitamin-B12 independent methionine synthase family. The cofactor is Zn(2+).

The catalysed reaction is 5-methyltetrahydropteroyltri-L-glutamate + L-homocysteine = tetrahydropteroyltri-L-glutamate + L-methionine. It participates in amino-acid biosynthesis; L-methionine biosynthesis via de novo pathway; L-methionine from L-homocysteine (MetE route): step 1/1. In terms of biological role, catalyzes the transfer of a methyl group from 5-methyltetrahydrofolate to homocysteine resulting in methionine formation. The chain is 5-methyltetrahydropteroyltriglutamate--homocysteine methyltransferase from Burkholderia ambifaria (strain ATCC BAA-244 / DSM 16087 / CCUG 44356 / LMG 19182 / AMMD) (Burkholderia cepacia (strain AMMD)).